Here is a 363-residue protein sequence, read N- to C-terminus: Type-2 angiotensin II receptor (363 aa).

At 1–45 (MKDNFSFAATSRNITSSRPFDNLNATGTNESAFNCSHKPSDKHLE) the chain is on the extracellular side. Residues asparagine 4, asparagine 13, asparagine 24, asparagine 29, and asparagine 34 are each glycosylated (N-linked (GlcNAc...) asparagine). 2 cysteine pairs are disulfide-bonded: cysteine 35/cysteine 290 and cysteine 117/cysteine 195. Residues 46 to 70 (AIPVLYYMIFVIGFAVNIVVVSLFC) form a helical membrane-spanning segment. At 71 to 80 (CQKGPKKVSS) the chain is on the cytoplasmic side. The helical transmembrane segment at 81 to 104 (IYIFNLALADLLLLATLPLWATYY) threads the bilayer. Positions 103 and 104 each coordinate angiotensin II. Residues 105 to 114 (SYRYDWLFGP) lie on the Extracellular side of the membrane. Residues 115–140 (VMCKVFGSFLTLNMFASIFFITCMSV) traverse the membrane as a helical segment. Over 141–159 (DRYQSVIYPFLSQRRNPWQ) the chain is Cytoplasmic. The chain crosses the membrane as a helical span at residues 160-181 (ASYVVPLVWCMACLSSLPTFYF). Residues arginine 182, tyrosine 204, and lysine 215 each contribute to the angiotensin II site. Topologically, residues 182–206 (RDVRTIEYLGVNACIMAFPPEKYAQ) are extracellular. The helical transmembrane segment at 207–232 (WSAGIALMKNILGFIIPLIFIATCYF) threads the bilayer. Topologically, residues 233–257 (GIRKHLLKTNSYGKNRITRDQVLKM) are cytoplasmic. Residues 258–281 (AAAVVLAFIICWLPFHVLTFLDAL) traverse the membrane as a helical segment. Aspartate 279 serves as a coordination point for angiotensin II. Topologically, residues 282 to 294 (TWMGIINSCEVIA) are extracellular. A helical membrane pass occupies residues 295-320 (VIDLALPFAILLGFTNSCVNPFLYCF). Aspartate 297 serves as a coordination point for angiotensin II. At 321–363 (VGNRFQQKLRSVFRVPITWLQGKRETMSCRKGSSLREMDTFVS) the chain is on the cytoplasmic side. The interval 324-333 (RFQQKLRSVF) is helix VIII. Serine 354 is subject to Phosphoserine; by PKC.

It belongs to the G-protein coupled receptor 1 family. In terms of assembly, interacts with MTUS1. Expressed at highest levels in adrenal gland and uterus.

The protein localises to the cell membrane. Its function is as follows. Receptor for angiotensin II, a vasoconstricting peptide. Signals primarily via a non-canonical G-protein- and beta-arrestin independent pathways. Cooperates with MTUS1 to inhibit ERK2 activation and cell proliferation. The protein is Type-2 angiotensin II receptor of Mus musculus (Mouse).